Here is a 304-residue protein sequence, read N- to C-terminus: Killer cell immunoglobulin-like receptor 2DS2 (304 aa).

Positions 1 to 21 (MSLMVVSMACVGFFLLQGAWP) are cleaved as a signal peptide. Residues 22–245 (HEGVHRKPSL…SKTGNPRHLH (224 aa)) lie on the Extracellular side of the membrane. Ig-like C2-type domains are found at residues 42 to 107 (EETV…VTHS) and 142 to 205 (GESV…FRDS). 2 disulfide bridges follow: cysteine 49–cysteine 100 and cysteine 149–cysteine 198. Asparagine 84, asparagine 178, and asparagine 211 each carry an N-linked (GlcNAc...) asparagine glycan. Residues 220 to 239 (VTGNPSNSWPSPTEPSSKTG) form a disordered region. A helical transmembrane segment spans residues 246 to 265 (VLIGTSVVKIPFTILLFFLL). Residues 266–304 (HRWCSNKKNAAVMDQEPAGNRTVNSEDSDEQDHQEVSYA) lie on the Cytoplasmic side of the membrane. Positions 280 to 304 (QEPAGNRTVNSEDSDEQDHQEVSYA) are disordered.

This sequence belongs to the immunoglobulin superfamily.

The protein localises to the cell membrane. Functionally, receptor on natural killer (NK) cells for HLA-C alleles. Does not inhibit the activity of NK cells. This is Killer cell immunoglobulin-like receptor 2DS2 from Homo sapiens (Human).